The primary structure comprises 159 residues: Transcription repressor OFP6 (159 aa).

The segment at 39–60 (PKRPSSTYRHCHSSISSATPSS) is disordered. Low complexity predominate over residues 51 to 60 (SSISSATPSS). The 60-residue stretch at 70 to 129 (VEKDSDDPYLDFRQSMLQMILENQIYSKDELRELLQCFLSLNSHYHHGIIVRAFSEIWED) folds into the OVATE domain.

Interacts with KNAT1 and KNAT7. Expressed in roots, shoots, rosette and cauline leaves, stems, flower buds and siliques.

Its subcellular location is the nucleus. In terms of biological role, transcriptional repressor that regulates multiple aspects of plant growth and development through the regulation of BEL1-LIKE (BLH) and KNOX TALE (KNAT) homeodomain transcription factors. The polypeptide is Transcription repressor OFP6 (OFP6) (Arabidopsis thaliana (Mouse-ear cress)).